Consider the following 291-residue polypeptide: Bifunctional protein FolD (291 aa).

NADP(+)-binding positions include 173–175 (GRS) and Ser198.

Belongs to the tetrahydrofolate dehydrogenase/cyclohydrolase family. In terms of assembly, homodimer.

It catalyses the reaction (6R)-5,10-methylene-5,6,7,8-tetrahydrofolate + NADP(+) = (6R)-5,10-methenyltetrahydrofolate + NADPH. The enzyme catalyses (6R)-5,10-methenyltetrahydrofolate + H2O = (6R)-10-formyltetrahydrofolate + H(+). It functions in the pathway one-carbon metabolism; tetrahydrofolate interconversion. Catalyzes the oxidation of 5,10-methylenetetrahydrofolate to 5,10-methenyltetrahydrofolate and then the hydrolysis of 5,10-methenyltetrahydrofolate to 10-formyltetrahydrofolate. The protein is Bifunctional protein FolD of Psychrobacter sp. (strain PRwf-1).